Consider the following 416-residue polypeptide: Cysteate synthase (416 aa).

Lys-104 carries the post-translational modification N6-(pyridoxal phosphate)lysine. Asn-130 contacts pyridoxal 5'-phosphate.

This sequence belongs to the threonine synthase family. Cysteate synthase subfamily. Homotrimer. Pyridoxal 5'-phosphate serves as cofactor.

It carries out the reaction O-phospho-L-serine + sulfite + H(+) = L-cysteate + phosphate. It functions in the pathway cofactor biosynthesis; coenzyme M biosynthesis. Specifically catalyzes the beta-elimination of phosphate from L-phosphoserine and the beta-addition of sulfite to the dehydroalanine intermediate to produce L-cysteate. This is Cysteate synthase from Methanosarcina barkeri (strain Fusaro / DSM 804).